Reading from the N-terminus, the 138-residue chain is Putative protein encoded by LINC02912 (138 aa).

2 helical membrane passes run 32-52 (FALSFLIGKMGIIILSVCLIC) and 65-85 (CLINVSFSLYSCFIVFVTISQ). Residues 109–138 (SGGQSQHSWPCPERSKNLPQVSKQLRNRAG) are disordered.

It localises to the membrane. This Homo sapiens (Human) protein is Putative protein encoded by LINC02912.